A 207-amino-acid polypeptide reads, in one-letter code: Small ribosomal subunit protein uS4 (207 aa).

Positions 31 to 55 are disordered; it reads KCKLDSKPGQHGRTSGARTSDYGTQ. Positions 42–53 are enriched in polar residues; that stretch reads GRTSGARTSDYG. The region spanning 97–160 is the S4 RNA-binding domain; sequence SRLDNVVYRM…KKQARIVEAL (64 aa).

This sequence belongs to the universal ribosomal protein uS4 family. In terms of assembly, part of the 30S ribosomal subunit. Contacts protein S5. The interaction surface between S4 and S5 is involved in control of translational fidelity.

One of the primary rRNA binding proteins, it binds directly to 16S rRNA where it nucleates assembly of the body of the 30S subunit. Its function is as follows. With S5 and S12 plays an important role in translational accuracy. The chain is Small ribosomal subunit protein uS4 from Burkholderia orbicola (strain MC0-3).